Reading from the N-terminus, the 418-residue chain is Elongation factor 1-gamma 2 (418 aa).

The region spanning M1–P82 is the GST N-terminal domain. Positions S87–V215 constitute a GST C-terminal domain. A disordered region spans residues E210–L265. The segment covering P221–K246 has biased composition (basic and acidic residues). The EF-1-gamma C-terminal domain occupies P258–K418.

As to quaternary structure, EF-1 is composed of four subunits: alpha, beta, delta, and gamma.

Its function is as follows. Probably plays a role in anchoring the complex to other cellular components. This chain is Elongation factor 1-gamma 2, found in Oryza sativa subsp. japonica (Rice).